The following is a 251-amino-acid chain: ATP synthase subunit a (251 aa).

A run of 6 helical transmembrane segments spans residues Asn30–Leu50, Phe86–Phe106, Ile116–Trp136, Phe145–Val165, Phe195–Leu215, and Ile219–Leu239.

It belongs to the ATPase A chain family. As to quaternary structure, F-type ATPases have 2 components, CF(1) - the catalytic core - and CF(0) - the membrane proton channel. CF(1) has five subunits: alpha(3), beta(3), gamma(1), delta(1), epsilon(1). CF(0) has three main subunits: a(1), b(2) and c(9-12). The alpha and beta chains form an alternating ring which encloses part of the gamma chain. CF(1) is attached to CF(0) by a central stalk formed by the gamma and epsilon chains, while a peripheral stalk is formed by the delta and b chains.

The protein resides in the cell inner membrane. In terms of biological role, key component of the proton channel; it plays a direct role in the translocation of protons across the membrane. The protein is ATP synthase subunit a of Acidiphilium cryptum (strain JF-5).